A 345-amino-acid chain; its full sequence is MALVPYPLTRPFLFGMDPEAAHELTLGSIARFQNTPLQCLWSQSRIADPVTVAGLRFPNRIGLAAGLDKNGRCIDGLGAMGFGFIEVGTVTPLGQPGNPKPRMFRLPEKNALINRLGFNNEGLASFLANVQRATSFRRNGGLLGLNIGKNAVTPIENAADDYLIALAGVYPHADYVTVNISSPNTKNLRALQSDAALDALLGALQTRRLALATEHGRSVPMFVKIAPDLDEAQVRVIAATLRHNGIDGVIATNTTLARDAVAGLAHADEAGGLSGAPVLAASNRVIAQLRAELGGAYPIIGVGGVLSGADARSKRAAGADLVQVYTGLIYRGPALVPECARALRG.

FMN-binding positions include 65-69 (AGLDK) and T89. Substrate is bound at residue K69. 114-118 (NRLGF) is a binding site for substrate. Residues N146 and N179 each contribute to the FMN site. Substrate is bound at residue N179. S182 functions as the Nucleophile in the catalytic mechanism. N184 lines the substrate pocket. FMN-binding residues include K224 and T252. 253–254 (NT) is a substrate binding site. Residues G275, G304, and 325-326 (YT) contribute to the FMN site.

This sequence belongs to the dihydroorotate dehydrogenase family. Type 2 subfamily. In terms of assembly, monomer. FMN serves as cofactor.

The protein resides in the cell membrane. The enzyme catalyses (S)-dihydroorotate + a quinone = orotate + a quinol. It participates in pyrimidine metabolism; UMP biosynthesis via de novo pathway; orotate from (S)-dihydroorotate (quinone route): step 1/1. Catalyzes the conversion of dihydroorotate to orotate with quinone as electron acceptor. This is Dihydroorotate dehydrogenase (quinone) from Leptothrix cholodnii (strain ATCC 51168 / LMG 8142 / SP-6) (Leptothrix discophora (strain SP-6)).